We begin with the raw amino-acid sequence, 416 residues long: Probable histone-binding protein lin-53 (416 aa).

WD repeat units lie at residues Asn118–Lys158, Gly170–Gly210, Gly220–Ala260, Ala263–His303, Ser307–Thr347, and Gly364–Val404.

The protein belongs to the WD repeat RBAP46/RBAP48/MSI1 family. Binds directly to helix 1 of the histone fold of histone H4, a region that is not accessible when H4 is in chromatin. Probable component of a NuRD-like complex, composed of at least lin-53 and hda-1. Interacts with lin-35. Interacts with hda-1; the interaction is direct. Component of the DRM complex, at least composed of lin-9, lin-35, lin-37, lin-52, lin-53, lin-54- dpl-1 and efl-1. Interacts with hcp-3.

The protein resides in the nucleus. It localises to the chromosome. Its subcellular location is the centromere. Its function is as follows. Core histone-binding subunit that may target chromatin assembly factors, chromatin remodeling factors and histone deacetylases to their histone substrates in a manner that is regulated by nucleosomal DNA. Required for hcp-3 and his-1 stabilization, localization of hcp-3 to centromeres and for proper chromosome segregation. Synthetic multivulva class B (synMuvB) protein. SynMuvB proteins are required to repress the induction of vulval development by Ras signaling and probably act by forming the multiprotein DRM complex that represses transcription. The sequence is that of Probable histone-binding protein lin-53 from Caenorhabditis briggsae.